The sequence spans 93 residues: CRISPR-associated endoribonuclease Cas2 2 (93 aa).

Aspartate 9 contributes to the Mg(2+) binding site.

This sequence belongs to the CRISPR-associated endoribonuclease Cas2 protein family. As to quaternary structure, homodimer, forms a heterotetramer with a Cas1 homodimer. It depends on Mg(2+) as a cofactor.

Its function is as follows. CRISPR (clustered regularly interspaced short palindromic repeat), is an adaptive immune system that provides protection against mobile genetic elements (viruses, transposable elements and conjugative plasmids). CRISPR clusters contain sequences complementary to antecedent mobile elements and target invading nucleic acids. CRISPR clusters are transcribed and processed into CRISPR RNA (crRNA). Functions as a ssRNA-specific endoribonuclease. Involved in the integration of spacer DNA into the CRISPR cassette. This Synechocystis sp. (strain ATCC 27184 / PCC 6803 / Kazusa) protein is CRISPR-associated endoribonuclease Cas2 2.